The following is a 385-amino-acid chain: Flavin-dependent monooxygenase (385 aa).

Residues 12 to 15 (ASIA), 34 to 36 (EKN), 44 to 47 (YAID), arginine 105, tyrosine 267, aspartate 289, and 296 to 302 (PLSGQGT) each bind FAD.

It belongs to the aromatic-ring hydroxylase family. The cofactor is FAD.

The catalysed reaction is 7-chlorotetracycline + NADPH + O2 + H(+) = (1S,10S,10aS)-3-(CONH2)-9-Cl-1-(Me2N)-3,3a,4,10-(HO)4-10-Me-2,5-dioxo-1H,10aH,11H,11aH-cyclopenta[b]anthracen-6-olate + CO + NADP(+) + H2O. It catalyses the reaction a tetracycline + NADPH + O2 + H(+) = a (1S,10aS)-3-(CONH2)-1-(Me2N)-3,3a,4,6-(HO)4-2,5-dioxo-1H,10aH,11H,11aH-cyclopenta[b]anthracene + CO + NADP(+) + H2O. With respect to regulation, inhibited by anhydrotetracycline. Its function is as follows. An FAD-requiring monooxygenase active on tetracycline antibiotic and some of its derivatives, which leads to their inactivation. Expression in E.coli confers high resistance to oxytetracycline, slightly less resistance to tetracycline, moderate resistance to minocycline but no resistance to tigecycline. Degrades tetracycline and oxytetracycline; the reaction requires NADPH. Degrades and confers resistance to chlortetracycline. The polypeptide is Flavin-dependent monooxygenase (Unknown prokaryotic organism).